The chain runs to 335 residues: ATP-dependent 6-phosphofructokinase (335 aa).

An ATP-binding site is contributed by Gly11. Residue 21–25 (RAVVR) coordinates ADP. ATP-binding positions include 72-73 (RY) and 102-105 (GDGS). Asp103 serves as a coordination point for Mg(2+). Residue 125-127 (TID) participates in substrate binding. Residue Asp127 is the Proton acceptor of the active site. Residue Arg154 participates in ADP binding. Residues Arg162 and 169-171 (MGR) each bind substrate. ADP contacts are provided by residues 185 to 187 (GAD) and 213 to 215 (KKH). Residues Glu222, Arg244, and 250-253 (HIQR) contribute to the substrate site.

It belongs to the phosphofructokinase type A (PFKA) family. ATP-dependent PFK group I subfamily. Prokaryotic clade 'B1' sub-subfamily. Homotetramer. Requires Mg(2+) as cofactor.

The protein localises to the cytoplasm. It carries out the reaction beta-D-fructose 6-phosphate + ATP = beta-D-fructose 1,6-bisphosphate + ADP + H(+). It functions in the pathway carbohydrate degradation; glycolysis; D-glyceraldehyde 3-phosphate and glycerone phosphate from D-glucose: step 3/4. Allosterically activated by ADP and other diphosphonucleosides, and allosterically inhibited by phosphoenolpyruvate. Catalyzes the phosphorylation of D-fructose 6-phosphate to fructose 1,6-bisphosphate by ATP, the first committing step of glycolysis. The protein is ATP-dependent 6-phosphofructokinase of Streptococcus pneumoniae serotype 19F (strain G54).